We begin with the raw amino-acid sequence, 137 residues long: Large ribosomal subunit protein uL16 (137 aa).

This sequence belongs to the universal ribosomal protein uL16 family. As to quaternary structure, part of the 50S ribosomal subunit.

Functionally, binds 23S rRNA and is also seen to make contacts with the A and possibly P site tRNAs. In Nitrobacter hamburgensis (strain DSM 10229 / NCIMB 13809 / X14), this protein is Large ribosomal subunit protein uL16.